We begin with the raw amino-acid sequence, 432 residues long: Trigger factor (432 aa).

Positions 161–246 (GTRATINFVG…VVKVESRELP (86 aa)) constitute a PPIase FKBP-type domain.

The protein belongs to the FKBP-type PPIase family. Tig subfamily.

It is found in the cytoplasm. It carries out the reaction [protein]-peptidylproline (omega=180) = [protein]-peptidylproline (omega=0). Involved in protein export. Acts as a chaperone by maintaining the newly synthesized protein in an open conformation. Functions as a peptidyl-prolyl cis-trans isomerase. This Aliivibrio fischeri (strain ATCC 700601 / ES114) (Vibrio fischeri) protein is Trigger factor.